Here is a 202-residue protein sequence, read N- to C-terminus: MSTANTVAIVIYSTYGHVVKLAEAEKAGIEKAGGKAVIYQFPETLSPEILEKMHAAPKPNYPVVTLDVLTQYDAFLFGYPTRYGTPPAQFRTFWDSTGGLWVQGALHGKYFGQFFSTGTLGGGQESTALTAMTSFVHHGMIFVPLGYKNTFSLMANVESIHGGSSWGAGSYAGADGSRNVSDDELEIARIQGETFFKTVFRK.

The 189-residue stretch at V7 to F195 folds into the Flavodoxin-like domain. Residue S181 is modified to Phosphoserine.

This sequence belongs to the WrbA family. Homodimer.

Unknown. Target of pap1 transcription factor. Confers brefeldin A resistance in S.pombe. The protein is P25 protein (obr1) of Schizosaccharomyces pombe (strain 972 / ATCC 24843) (Fission yeast).